Here is an 86-residue protein sequence, read N- to C-terminus: Large ribosomal subunit protein uL23 (86 aa).

The protein belongs to the universal ribosomal protein uL23 family. As to quaternary structure, part of the 50S ribosomal subunit. Contacts protein L29.

In terms of biological role, binds to 23S rRNA. One of the proteins that surrounds the polypeptide exit tunnel on the outside of the ribosome. The polypeptide is Large ribosomal subunit protein uL23 (Thermococcus onnurineus (strain NA1)).